Here is a 107-residue protein sequence, read N- to C-terminus: uncharacterized protein (107 aa).

Residues 12–32 form a helical membrane-spanning segment; that stretch reads IILNIFLALLLVYFIFHCIYG.

The protein resides in the membrane. This is an uncharacterized protein from Rickettsia prowazekii (strain Madrid E).